A 395-amino-acid chain; its full sequence is Elongation factor Tu (395 aa).

The tr-type G domain maps to 10-204 (KPHVNIGTIG…AIDNWIPLPQ (195 aa)). The interval 19 to 26 (GHVDHGKT) is G1. A GTP-binding site is contributed by 19-26 (GHVDHGKT). Thr26 lines the Mg(2+) pocket. Residues 60-64 (GITIN) form a G2 region. Residues 81–84 (DCPG) are G3. GTP is bound by residues 81-85 (DCPGH) and 136-139 (NKVD). A G4 region spans residues 136–139 (NKVD). Residues 174–176 (SAL) are G5.

Belongs to the TRAFAC class translation factor GTPase superfamily. Classic translation factor GTPase family. EF-Tu/EF-1A subfamily. Monomer.

It is found in the cytoplasm. The enzyme catalyses GTP + H2O = GDP + phosphate + H(+). Its function is as follows. GTP hydrolase that promotes the GTP-dependent binding of aminoacyl-tRNA to the A-site of ribosomes during protein biosynthesis. The sequence is that of Elongation factor Tu from Azobacteroides pseudotrichonymphae genomovar. CFP2.